We begin with the raw amino-acid sequence, 509 residues long: DNA primase large subunit (509 aa).

The interdomain linker stretch occupies residues 253–270; sequence LSHSYTGQDYSTQGNVGK. Residues 266–509 are interacts with PRIM1; the sequence is GNVGKISLDQ…GLEDYFSEDS (244 aa). The [4Fe-4S] cluster site is built by Cys287, Cys367, Cys384, and Cys424. Residues 300–442 are RNA:DNA duplex-binding; sequence HLRHGGRMQY…NVDDCGFSLN (143 aa). The interval 461 to 486 is disordered; the sequence is IKKEPIQPETPQPKPSVQKTKDASSA. Thr470 is subject to Phosphothreonine.

It belongs to the eukaryotic-type primase large subunit family. In terms of assembly, heterodimer of a catalytic subunit PRIM1 and a regulatory subunit PRIM2, also known as the DNA primase complex. Interacts via (C-terminus) with PRIM1. Component of the alpha DNA polymerase complex (also known as the alpha DNA polymerase-primase complex) consisting of four subunits: the catalytic subunit POLA1, the regulatory subunit POLA2, and the primase complex subunits PRIM1 and PRIM2 respectively. Within the complex, POLA1 directly interacts with PRIM2. The cofactor is [4Fe-4S] cluster.

Regulatory subunit of the DNA primase complex and component of the DNA polymerase alpha complex (also known as the alpha DNA polymerase-primase complex) which play an essential role in the initiation of DNA synthesis. During the S phase of the cell cycle, the DNA polymerase alpha complex (composed of a catalytic subunit POLA1, an accessory subunit POLA2 and two primase subunits, the catalytic subunit PRIM1 and the regulatory subunit PRIM2) is recruited to DNA at the replicative forks via direct interactions with MCM10 and WDHD1. The primase subunit of the polymerase alpha complex initiates DNA synthesis by oligomerising short RNA primers on both leading and lagging strands. These primers are initially extended by the polymerase alpha catalytic subunit and subsequently transferred to polymerase delta and polymerase epsilon for processive synthesis on the lagging and leading strand, respectively. In the primase complex, both subunits are necessary for the initial di-nucleotide formation, but the extension of the primer depends only on the catalytic subunit. Binds RNA:DNA duplex and coordinates the catalytic activities of PRIM1 and POLA2 during primase-to-polymerase switch. This is DNA primase large subunit (PRIM2) from Homo sapiens (Human).